Reading from the N-terminus, the 126-residue chain is Small ribosomal subunit protein uS12 (126 aa).

Residues 1-16 (MPTVNQLVRQGRTMNK) are compositionally biased toward polar residues. Positions 1-24 (MPTVNQLVRQGRTMNKTKTKSPAL) are disordered. D89 carries the post-translational modification 3-methylthioaspartic acid.

It belongs to the universal ribosomal protein uS12 family. Part of the 30S ribosomal subunit. Contacts proteins S8 and S17. May interact with IF1 in the 30S initiation complex.

Functionally, with S4 and S5 plays an important role in translational accuracy. Interacts with and stabilizes bases of the 16S rRNA that are involved in tRNA selection in the A site and with the mRNA backbone. Located at the interface of the 30S and 50S subunits, it traverses the body of the 30S subunit contacting proteins on the other side and probably holding the rRNA structure together. The combined cluster of proteins S8, S12 and S17 appears to hold together the shoulder and platform of the 30S subunit. The polypeptide is Small ribosomal subunit protein uS12 (Elusimicrobium minutum (strain Pei191)).